The following is a 312-amino-acid chain: Urease accessory protein UreD (312 aa).

It belongs to the UreD family. In terms of assembly, ureD, UreF and UreG form a complex that acts as a GTP-hydrolysis-dependent molecular chaperone, activating the urease apoprotein by helping to assemble the nickel containing metallocenter of UreC. The UreE protein probably delivers the nickel.

The protein resides in the cytoplasm. Its function is as follows. Required for maturation of urease via the functional incorporation of the urease nickel metallocenter. This is Urease accessory protein UreD from Marinomonas sp. (strain MWYL1).